Reading from the N-terminus, the 205-residue chain is Transcriptional regulator GfcR (205 aa).

This sequence belongs to the purine/pyrimidine phosphoribosyltransferase family. GfcR subfamily.

This is Transcriptional regulator GfcR from Methanococcus maripaludis (strain C7 / ATCC BAA-1331).